The following is a 396-amino-acid chain: L-lactate dehydrogenase (396 aa).

Residues M1–G380 form the FMN hydroxy acid dehydrogenase domain. Y24 contributes to the substrate binding site. Residues S106 and Q127 each coordinate FMN. Y129 contacts substrate. T155 contributes to the FMN binding site. Residue R164 coordinates substrate. FMN is bound at residue K251. H275 (proton acceptor) is an active-site residue. R278 serves as a coordination point for substrate. D306–R330 contributes to the FMN binding site.

The protein belongs to the FMN-dependent alpha-hydroxy acid dehydrogenase family. Requires FMN as cofactor.

The protein localises to the cell inner membrane. The enzyme catalyses (S)-lactate + A = pyruvate + AH2. Catalyzes the conversion of L-lactate to pyruvate. Is coupled to the respiratory chain. This chain is L-lactate dehydrogenase, found in Salmonella paratyphi B (strain ATCC BAA-1250 / SPB7).